Reading from the N-terminus, the 246-residue chain is 1-(5-phosphoribosyl)-5-[(5-phosphoribosylamino)methylideneamino] imidazole-4-carboxamide isomerase (246 aa).

Aspartate 8 functions as the Proton acceptor in the catalytic mechanism. Aspartate 131 (proton donor) is an active-site residue.

Belongs to the HisA/HisF family.

The protein resides in the cytoplasm. It catalyses the reaction 1-(5-phospho-beta-D-ribosyl)-5-[(5-phospho-beta-D-ribosylamino)methylideneamino]imidazole-4-carboxamide = 5-[(5-phospho-1-deoxy-D-ribulos-1-ylimino)methylamino]-1-(5-phospho-beta-D-ribosyl)imidazole-4-carboxamide. The protein operates within amino-acid biosynthesis; L-histidine biosynthesis; L-histidine from 5-phospho-alpha-D-ribose 1-diphosphate: step 4/9. In Delftia acidovorans (strain DSM 14801 / SPH-1), this protein is 1-(5-phosphoribosyl)-5-[(5-phosphoribosylamino)methylideneamino] imidazole-4-carboxamide isomerase.